A 559-amino-acid chain; its full sequence is MASAKKAVLGPLVGAVDQGTSSTRFLVFNSKTAELLSHHQVEIKQEFPREGWVEQDPKEILQSVYECIEKTCEKLGQLNIDISNIKAIGVSNQRETTVVWDKLTGEPLYNAVVWLDLRTQSTVESLSKRIPGNNNFVKSKTGLPLSTYFSAVKLRWLLDNVRKVQKAVEEDRALFGTIDSWLIWSLTGGASGGVHCTDVTNASRTMLFNIHSLEWDKELCEFFEIPMKILPNVRSSSEIYGLMKISHSPKAGALEGVPISGCLGDQSAALVGQMCFQDGQAKNTYGTGCFLLCNTGRKCVFSEHGLLTTVAYKLGRDKPVYYALEGSVAIAGAVIRWLRDNLGIIKSSEEIEKLAKEVGTSYGCYFVPAFSGLYAPYWEPSARGIICGLTQFTNKCHIAFAALEAVCFQTREILDAMNRDCGIPLSHLQVDGGMTNNKILMQLQADILYIPVVKPSMPETTALGAAMAAGAAEGVGVWSLEPEDLSAVTMERFEPQINAEESEIRYSTWKKAVMKSMGWVTTQSSESGDPSIFCSLPLGFFIVSSVVMLIGARYLSGMP.

Residue T20 coordinates ADP. ATP contacts are provided by T20, S21, and S22. Position 20 (T20) interacts with sn-glycerol 3-phosphate. ADP is bound at residue R24. 3 residues coordinate sn-glycerol 3-phosphate: R94, E95, and Y148. Residues R94, E95, and Y148 each coordinate glycerol. G252 contributes to the beta-D-fructose 1,6-bisphosphate binding site. D265 provides a ligand contact to sn-glycerol 3-phosphate. Glycerol is bound by residues D265 and Q266. 4 residues coordinate ADP: T287, G332, G433, and N437. ATP contacts are provided by T287, G332, and G433. E501 provides a ligand contact to Zn(2+). A helical transmembrane segment spans residues 532 to 552 (IFCSLPLGFFIVSSVVMLIGA).

It belongs to the FGGY kinase family.

Its subcellular location is the mitochondrion outer membrane. The protein localises to the nucleus. The protein resides in the cytoplasm. It is found in the cytosol. The enzyme catalyses glycerol + ATP = sn-glycerol 3-phosphate + ADP + H(+). It participates in polyol metabolism; glycerol degradation via glycerol kinase pathway; sn-glycerol 3-phosphate from glycerol: step 1/1. Functionally, kinase that plays a key role in glycerol metabolism, catalyzing its phosphorylation to produce sn-glycerol 3-phosphate. Sn-glycerol 3-phosphate is a crucial intermediate in various metabolic pathways, such as the synthesis of glycerolipids and triglycerides, glycogenesis, glycolysis and gluconeogenesis. This Bos taurus (Bovine) protein is Glycerol kinase.